Reading from the N-terminus, the 332-residue chain is GTP cyclohydrolase-2 (332 aa).

2 disordered regions span residues 1-20 (MASK…SETH) and 25-46 (PLLS…IPPE). Positions 29 to 41 (PTLTPSHIPSQTP) are enriched in polar residues. Residue 171 to 175 (RIHSE) participates in GTP binding. 3 residues coordinate Zn(2+): Cys-176, Cys-187, and Cys-189. GTP-binding positions include Gln-192, 214–216 (EGR), and Thr-236. Asp-248 functions as the Proton acceptor in the catalytic mechanism. The Nucleophile role is filled by Arg-250. The GTP site is built by Thr-271 and Lys-276.

This sequence belongs to the GTP cyclohydrolase II family. It depends on Zn(2+) as a cofactor.

It catalyses the reaction GTP + 4 H2O = 2,5-diamino-6-hydroxy-4-(5-phosphoribosylamino)-pyrimidine + formate + 2 phosphate + 3 H(+). The protein operates within cofactor biosynthesis; riboflavin biosynthesis; 5-amino-6-(D-ribitylamino)uracil from GTP: step 1/4. Functionally, catalyzes the conversion of GTP to 2,5-diamino-6-ribosylamino-4(3H)-pyrimidinone 5'-phosphate (DARP), formate and pyrophosphate. The protein is GTP cyclohydrolase-2 (RIB1) of Meyerozyma guilliermondii (strain ATCC 6260 / CBS 566 / DSM 6381 / JCM 1539 / NBRC 10279 / NRRL Y-324) (Yeast).